The chain runs to 36 residues: Conotoxin Bu21 (36 aa).

A propeptide spanning residues 1 to 21 is cleaved from the precursor; it reads DGANAEATDNKPGVFERDEKK. Disulfide bonds link Cys22–Cys28 and Cys23–Cys34.

Belongs to the conotoxin A superfamily. In terms of tissue distribution, expressed by the venom duct.

The protein resides in the secreted. The chain is Conotoxin Bu21 from Conus bullatus (Bubble cone).